The sequence spans 787 residues: Phenylalanine--tRNA ligase beta subunit (787 aa).

The tRNA-binding domain occupies 39–149; that stretch reads APAFAGVVIA…EDAPVGTNIR (111 aa). The 76-residue stretch at 400-475 folds into the B5 domain; that stretch reads PEAKQVGLRL…RVYGYENIPD (76 aa). The Mg(2+) site is built by aspartate 453, aspartate 459, glutamate 462, and glutamate 463. An FDX-ACB domain is found at 694 to 786; the sequence is SKFQPVRRDL…AATAAGARLR (93 aa).

The protein belongs to the phenylalanyl-tRNA synthetase beta subunit family. Type 1 subfamily. In terms of assembly, tetramer of two alpha and two beta subunits. It depends on Mg(2+) as a cofactor.

Its subcellular location is the cytoplasm. It catalyses the reaction tRNA(Phe) + L-phenylalanine + ATP = L-phenylalanyl-tRNA(Phe) + AMP + diphosphate + H(+). This chain is Phenylalanine--tRNA ligase beta subunit (pheT), found in Neisseria meningitidis serogroup B (strain ATCC BAA-335 / MC58).